A 68-amino-acid chain; its full sequence is Antimicrobial peptide Eval418 (68 aa).

The N-terminal stretch at 1-23 (MRTQLAVLLVALVLLQMIAQSEA) is a signal peptide. Isoleucine amide is present on isoleucine 36. A propeptide spanning residues 37 to 68 (GKRGLRNLDDLDDVFDDDLSAADLEFLKQLMR) is cleaved from the precursor.

Belongs to the non-disulfide-bridged peptide (NDBP) superfamily. Short antimicrobial peptide (group 4) family. In terms of tissue distribution, expressed by the venom gland.

It is found in the secreted. Its function is as follows. Probable antimicrobial peptide. Shows dose-dependent and time-dependent inactivation of herpes simplex virus type 1 (HSV-1) and dose-dependent inhibition of HSV-1 viral attachment to host cells. Scarcely suppress an established HSV-1 infection due to poor cellular uptake. This chain is Antimicrobial peptide Eval418, found in Euscorpiops validus (Scorpion).